The sequence spans 490 residues: Sec sixty-one protein homolog (490 aa).

The Cytoplasmic portion of the chain corresponds to 1–32; the sequence is MSGFRLIDIVKPILPILPEVELPFEKLPFDDK. Residues 33 to 53 traverse the membrane as a helical segment; sequence IVYTIFAGLIYLFAQFPLVGL. Residues 54–121 lie on the Lumenal side of the membrane; the sequence is PKATTPNVND…DRELFQSLTK (68 aa). The chain crosses the membrane as a helical span at residues 122–142; sequence VFAIVQYVILTNIFIFAGYFG. Over 143–146 the chain is Cytoplasmic; it reads DDLS. Residues 147 to 167 traverse the membrane as a helical segment; that stretch reads VVQIGLINFQLVGAGIFTTLL. Residues 168–174 lie on the Lumenal side of the membrane; sequence AEVIDKG. Residues 175–195 form a helical membrane-spanning segment; the sequence is FGFSSGAMIINTVVIATNLVA. Residues 196–242 are Cytoplasmic-facing; sequence DTFGVSQIKVGEDDQTEAQGALINLIQGLRSKHKTFIGGIISAFNRD. A helical membrane pass occupies residues 243 to 263; sequence YLPNLTTTIIVLAIAIIVCYL. The Lumenal portion of the chain corresponds to 264–293; the sequence is QSVRVELPIRSTRARGTNNVYPIKLLYTGC. Residues 294–314 form a helical membrane-spanning segment; the sequence is LSVLFSYTILFYIHIFAFVLI. Residues 315–339 are Cytoplasmic-facing; that stretch reads QLVAKNEPTHIICKIMGHYENANNL. The helical transmembrane segment at 340-360 threads the bilayer; it reads LAVPTFPLSLLAPPTSFFKGV. Thr361 is a topological domain (lumenal). The chain crosses the membrane as a helical span at residues 362 to 382; sequence QQPLTFITYSAFILVTGIWFA. The Cytoplasmic segment spans residues 383-421; that stretch reads DKWQAISGSSARDVALEFKDQGITLMGRREQNVAKELNK. Residues 422-442 traverse the membrane as a helical segment; it reads VIPIAAVTGASVLSLITVIGE. At 443–449 the chain is on the lumenal side; sequence SLGLKGK. The helical transmembrane segment at 450–470 threads the bilayer; it reads AAGIVVGIAGGFSLLEVITIE. At 471–490 the chain is on the cytoplasmic side; it reads YQQSGGQSALNQVLGVPGAM.

It belongs to the SecY/SEC61-alpha family. Component of the heterotrimeric Ssh1 complex, which is composed of SSH1, SBH2 and SSS1.

It is found in the endoplasmic reticulum membrane. Functionally, part of the Ssh1 complex, which probably is the major component of a channel-forming translocon complex that may function exclusively in the cotranslational pathway of protein endoplasmic reticulum (ER) import. This chain is Sec sixty-one protein homolog (SSH1), found in Saccharomyces cerevisiae (strain ATCC 204508 / S288c) (Baker's yeast).